The following is a 123-amino-acid chain: Nitrogen regulatory protein GlnK2 (123 aa).

Residues 38–40 and S49 each bind ATP; that span reads SLT. S49 lines the ADP pocket. Y62 carries the O-UMP-tyrosine modification. ATP is bound by residues V75, 98–101, and R114; that span reads GDGK. 98 to 101 lines the ADP pocket; sequence GDGK. 98 to 101 lines the AMP pocket; sequence GDGK.

The protein belongs to the P(II) protein family. As to quaternary structure, homotrimer. Interacts with the glutamine synthetase 3 (GS3) in the presence of 2-oxoglutarate. Interacts in vitro with Amt1 after ammonium shock. May also interact with Amt2. Post-translationally, uridylylated on Tyr-62.

The protein resides in the cytoplasm. Binds the effectors ADP and ATP. Also binds AMP with high affinity, raising the possibility that AMP could be an important PII effector, at least in archaea. The change in the ATP/AMP ratio may be more relevant for describing the energy status in the cells than the ATP/ADP ratio alone. Involved in the regulation of nitrogen metabolism. Regulates the activity of its targets by protein-protein interaction in response to the nitrogen status of the cell. Increases the activity of the glutamine synthetase 3 in the presence of 2-oxoglutarate. May regulate the activity of the ammonia channel Amt2 via direct interaction. The chain is Nitrogen regulatory protein GlnK2 from Haloferax mediterranei (strain ATCC 33500 / DSM 1411 / JCM 8866 / NBRC 14739 / NCIMB 2177 / R-4) (Halobacterium mediterranei).